The following is a 212-amino-acid chain: Ribonuclease HII (212 aa).

Residues Met-1 to Ile-204 enclose the RNase H type-2 domain. A divalent metal cation-binding residues include Asp-6, Glu-7, and Asp-103.

Belongs to the RNase HII family. Mn(2+) serves as cofactor. The cofactor is Mg(2+).

It is found in the cytoplasm. It carries out the reaction Endonucleolytic cleavage to 5'-phosphomonoester.. In terms of biological role, endonuclease that specifically degrades the RNA of RNA-DNA hybrids. This is Ribonuclease HII from Saccharolobus solfataricus (strain ATCC 35092 / DSM 1617 / JCM 11322 / P2) (Sulfolobus solfataricus).